Reading from the N-terminus, the 874-residue chain is Alanine--tRNA ligase (874 aa).

Zn(2+)-binding residues include His563, His567, Cys664, and His668.

This sequence belongs to the class-II aminoacyl-tRNA synthetase family. Requires Zn(2+) as cofactor.

It localises to the cytoplasm. It catalyses the reaction tRNA(Ala) + L-alanine + ATP = L-alanyl-tRNA(Ala) + AMP + diphosphate. Functionally, catalyzes the attachment of alanine to tRNA(Ala) in a two-step reaction: alanine is first activated by ATP to form Ala-AMP and then transferred to the acceptor end of tRNA(Ala). Also edits incorrectly charged Ser-tRNA(Ala) and Gly-tRNA(Ala) via its editing domain. This is Alanine--tRNA ligase from Methylobacillus flagellatus (strain ATCC 51484 / DSM 6875 / VKM B-1610 / KT).